The sequence spans 162 residues: Endoribonuclease YbeY (162 aa).

H127, H131, and H137 together coordinate Zn(2+).

The protein belongs to the endoribonuclease YbeY family. Zn(2+) serves as cofactor.

The protein resides in the cytoplasm. Functionally, single strand-specific metallo-endoribonuclease involved in late-stage 70S ribosome quality control and in maturation of the 3' terminus of the 16S rRNA. In Acetivibrio thermocellus (strain ATCC 27405 / DSM 1237 / JCM 9322 / NBRC 103400 / NCIMB 10682 / NRRL B-4536 / VPI 7372) (Clostridium thermocellum), this protein is Endoribonuclease YbeY.